Reading from the N-terminus, the 284-residue chain is Shikimate dehydrogenase (NADP(+)) (284 aa).

Residues 20-22 (SIS) and serine 67 each bind shikimate. Catalysis depends on lysine 71, which acts as the Proton acceptor. Residues asparagine 92 and aspartate 107 each contribute to the shikimate site. NADP(+) contacts are provided by residues 129-133 (GAGGA) and valine 227. Tyrosine 229 contacts shikimate. Glycine 250 contributes to the NADP(+) binding site.

This sequence belongs to the shikimate dehydrogenase family. As to quaternary structure, homodimer.

The catalysed reaction is shikimate + NADP(+) = 3-dehydroshikimate + NADPH + H(+). It functions in the pathway metabolic intermediate biosynthesis; chorismate biosynthesis; chorismate from D-erythrose 4-phosphate and phosphoenolpyruvate: step 4/7. Its function is as follows. Involved in the biosynthesis of the chorismate, which leads to the biosynthesis of aromatic amino acids. Catalyzes the reversible NADPH linked reduction of 3-dehydroshikimate (DHSA) to yield shikimate (SA). The polypeptide is Shikimate dehydrogenase (NADP(+)) (Streptococcus sanguinis (strain SK36)).